We begin with the raw amino-acid sequence, 448 residues long: Probable sodium-coupled neutral amino acid transporter 6 (448 aa).

2 stretches are compositionally biased toward polar residues: residues 1–12 (MQASDSSINTLD) and 26–36 (LLANSPQRRSS). Positions 1 to 36 (MQASDSSINTLDGHQVSAGRDESTPLLANSPQRRSS) are disordered. 5 consecutive transmembrane segments (helical) span residues 40–60 (SFGFAVFNLMNAIMGSGILGL), 69–89 (ILGFSALLLIVALLAAYSIHL), 117–137 (LVACTILIQNVGAMSSYLFII), 164–184 (LLIITSVCIVLPLALLPKIGF), and 185–205 (LGYTSSLSFFFMVYFAVVIVI). The cysteines at positions 212 and 232 are disulfide-linked. Residues Asn-218 and Asn-228 are each glycosylated (N-linked (GlcNAc...) asparagine). The next 6 membrane-spanning stretches (helical) occupy residues 244 to 264 (AFALPTMAFSFLCHTSVLPIY), 281 to 301 (VGIALSFLIYYISALFGYLTF), 321 to 341 (VLIITVRLCILLAVLLTVPLI), 365 to 385 (ILVTLVLNIIIVLLAIYVPDM), 388 to 408 (VFGVVGSTTSTCLLFVFPGLF), and 425 to 445 (ACGLLVLGICIGACSLTLIIM).

Belongs to the amino acid/polyamine transporter 2 family.

The protein resides in the cell membrane. Its function is as follows. Probable sodium-dependent amino acid/proton antiporter, could be a neuronal transporter for glutamate. The chain is Probable sodium-coupled neutral amino acid transporter 6 (slc38a6) from Xenopus tropicalis (Western clawed frog).